We begin with the raw amino-acid sequence, 164 residues long: Phosphopantetheine adenylyltransferase (164 aa).

S11 serves as a coordination point for substrate. ATP is bound by residues 11 to 12 (SF) and H19. The substrate site is built by K43, L75, and R89. ATP is bound by residues 90–92 (GLR), E100, and 125–131 (YGYLSSS).

This sequence belongs to the bacterial CoaD family. In terms of assembly, homohexamer. Mg(2+) serves as cofactor.

Its subcellular location is the cytoplasm. The catalysed reaction is (R)-4'-phosphopantetheine + ATP + H(+) = 3'-dephospho-CoA + diphosphate. It participates in cofactor biosynthesis; coenzyme A biosynthesis; CoA from (R)-pantothenate: step 4/5. Reversibly transfers an adenylyl group from ATP to 4'-phosphopantetheine, yielding dephospho-CoA (dPCoA) and pyrophosphate. This Geobacter sulfurreducens (strain ATCC 51573 / DSM 12127 / PCA) protein is Phosphopantetheine adenylyltransferase.